The primary structure comprises 836 residues: General vesicular transport factor p115 (836 aa).

Residues 1 to 22 (MEFLKSGIKTVLGSTEPGQQPS) form a disordered region. The segment covering 12–22 (LGSTEPGQQPS) has biased composition (polar residues). ARM repeat units follow at residues 24 to 64 (AETV…VGAQ), 65 to 124 (GMPP…IKTP), 126 to 166 (HVTL…LILV), 169 to 210 (MGVS…VAFE), 211 to 256 (NAFD…FKEG), 316 to 359 (RLLH…LGRV), 368 to 413 (PAIV…QTLL), 424 to 463 (STGQLLCTGLFSTDALANWFSAVALMHSLVENVALKEELL), 477 to 518 (TLLE…KALL), 523 to 577 (TMAY…IIKR), and 579 to 636 (GQES…LVSG). Coiled coils occupy residues 663–707 (IIRG…DQNT) and 744–806 (NMYF…EEAG). The segment at 803–836 (EEAGSTNTLPTSNVAPSVPAAGGGSPIPSGTASR) is disordered. Positions 806–816 (GSTNTLPTSNV) are enriched in polar residues. The segment covering 817 to 836 (APSVPAAGGGSPIPSGTASR) has biased composition (low complexity).

The protein belongs to the VDP/USO1/EDE1 family.

Its subcellular location is the cytoplasm. The protein localises to the golgi apparatus. It is found in the golgi stack. The protein resides in the golgi stack membrane. It localises to the endoplasmic reticulum. Its subcellular location is the endoplasmic reticulum membrane. Essential for maintaining the architecture of the Golgi stacks and for normal organization of the transitional endoplasmic reticulum (tER). Required for both the formation of the Golgi stacks and the maintenance of the individual cisternae. This chain is General vesicular transport factor p115, found in Drosophila melanogaster (Fruit fly).